Here is a 273-residue protein sequence, read N- to C-terminus: HTH-type transcriptional activator RhaS (273 aa).

Residues 174–272 enclose the HTH araC/xylS-type domain; it reads YQLLDWLQNN…SQSPRDLRSQ (99 aa). 2 DNA-binding regions (H-T-H motif) span residues 191-212 and 239-262; these read PELA…KNKT and VTDI…KREF.

In terms of assembly, binds DNA as a dimer.

Its subcellular location is the cytoplasm. Activates expression of the rhaBAD and rhaT operons. The polypeptide is HTH-type transcriptional activator RhaS (Yersinia pseudotuberculosis serotype O:1b (strain IP 31758)).